The primary structure comprises 621 residues: Membrane protein insertase YidC (621 aa).

The next 6 membrane-spanning stretches (helical) occupy residues 1 to 21 (MDKNTLVGFALIGAVVIGFSI), 363 to 383 (GWGLSMGVVLLLMTIIVKVLV), 436 to 456 (MGGCLPMLIQMPVFMALFFFV), 486 to 506 (IPLLGNHLSLFCLLFSITNIL), 527 to 547 (LMMYIMPVMFIFIFNGYSSGL), and 549 to 569 (YYYFISGLIGILTMVILRKTT).

Belongs to the OXA1/ALB3/YidC family. Type 1 subfamily. Interacts with the Sec translocase complex via SecD. Specifically interacts with transmembrane segments of nascent integral membrane proteins during membrane integration.

It is found in the cell inner membrane. Its function is as follows. Required for the insertion and/or proper folding and/or complex formation of integral membrane proteins into the membrane. Involved in integration of membrane proteins that insert both dependently and independently of the Sec translocase complex, as well as at least some lipoproteins. Aids folding of multispanning membrane proteins. The polypeptide is Membrane protein insertase YidC (Phocaeicola vulgatus (strain ATCC 8482 / DSM 1447 / JCM 5826 / CCUG 4940 / NBRC 14291 / NCTC 11154) (Bacteroides vulgatus)).